The primary structure comprises 351 residues: sn-1 oleoyl-lipid 12-desaturase (351 aa).

Residues 1 to 20 are disordered; that stretch reads MTLSIVKSEDSSSRPSAVPS. 2 helical membrane passes run 44 to 62 and 68 to 88; these read AWMT…WLGI and FLLP…FVIG. The Histidine box-1 signature appears at 89–93; that stretch reads HDCGH. The chain crosses the membrane as a helical span at residues 100-120; it reads VWVNDWVGHILFLPIIYPFHS. The short motif at 125–129 is the Histidine box-2 element; sequence HNQHH. A run of 2 helical transmembrane segments spans residues 199–219 and 221–241; these read LLVI…IGVW and FVKF…TFTL. The short motif at 289-293 is the Histidine box-3 element; the sequence is HHVTT.

This sequence belongs to the fatty acid desaturase type 2 family. It depends on Fe(2+) as a cofactor.

Its subcellular location is the cellular thylakoid membrane. The catalysed reaction is a 1-[(9Z)-octadecenoyl]-2-acyl-glycerolipid + 2 reduced [2Fe-2S]-[ferredoxin] + O2 + 2 H(+) = a 1-[(9Z,12Z)-octadecdienoyl]-2-acyl-glycerolipid + 2 oxidized [2Fe-2S]-[ferredoxin] + 2 H2O. Its pathway is lipid metabolism; polyunsaturated fatty acid biosynthesis. Desaturase involved in fatty acid biosynthesis. Introduces a double bond at carbon 12 of oleoyl groups (18:1) attached to the sn-1 position of the glycerol moiety of membrane glycerolipids. This Arthrospira platensis (Spirulina platensis) protein is sn-1 oleoyl-lipid 12-desaturase.